The primary structure comprises 109 residues: DNA-binding protein Mpal_0536 (109 aa).

Residues 14 to 35 (MAQLQSQQMDQQQMDEEKQRAK) are disordered. Residues 16–25 (QLQSQQMDQQ) show a composition bias toward low complexity.

The protein belongs to the PDCD5 family.

This Methanosphaerula palustris (strain ATCC BAA-1556 / DSM 19958 / E1-9c) protein is DNA-binding protein Mpal_0536.